A 20-amino-acid polypeptide reads, in one-letter code: Hongotoxin-5 (20 aa).

The protein belongs to the short scorpion toxin superfamily. Potassium channel inhibitor family. Alpha-KTx 02 subfamily. As to expression, expressed by the venom gland.

It is found in the secreted. Its function is as follows. Potent selective inhibitor of Kv1/KCNA voltage-gated potassium channels. The polypeptide is Hongotoxin-5 (Centruroides limbatus (Bark scorpion)).